The following is a 364-amino-acid chain: Aminomethyltransferase (364 aa).

Belongs to the GcvT family. The glycine cleavage system is composed of four proteins: P, T, L and H.

The enzyme catalyses N(6)-[(R)-S(8)-aminomethyldihydrolipoyl]-L-lysyl-[protein] + (6S)-5,6,7,8-tetrahydrofolate = N(6)-[(R)-dihydrolipoyl]-L-lysyl-[protein] + (6R)-5,10-methylene-5,6,7,8-tetrahydrofolate + NH4(+). Functionally, the glycine cleavage system catalyzes the degradation of glycine. This Shewanella pealeana (strain ATCC 700345 / ANG-SQ1) protein is Aminomethyltransferase.